The primary structure comprises 265 residues: Chlorophyll a-b binding protein 1A, chloroplastic (265 aa).

The N-terminal 34 residues, 1 to 34 (MAAAAMALSSPSFAGQAVKLSPSASENSGNGRIT), are a transit peptide targeting the chloroplast. Residues 151–171 (LVHAQSILAIWACQVVLMGAV) form a helical membrane-spanning segment. Chlorophyll b is bound by residues V152, S156, Q164, E172, R175, and L181. Chlorophyll a-binding residues include K212, E213, N216, R218, Q230, H245, and A254. Residues 219–239 (LAMFSMFGFFVQAIVTGKGPL) traverse the membrane as a helical segment. Position 261 (F261) interacts with chlorophyll b.

Belongs to the light-harvesting chlorophyll a/b-binding (LHC) protein family. The LHC complex consists of chlorophyll a-b binding proteins. Binds at least 14 chlorophylls (8 Chl-a and 6 Chl-b) and carotenoids such as lutein and neoxanthin. serves as cofactor. In terms of processing, photoregulated by reversible phosphorylation of its threonine residues.

The protein localises to the plastid. Its subcellular location is the chloroplast thylakoid membrane. Its function is as follows. The light-harvesting complex (LHC) functions as a light receptor, it captures and delivers excitation energy to photosystems with which it is closely associated. The polypeptide is Chlorophyll a-b binding protein 1A, chloroplastic (CAB1A) (Solanum lycopersicum (Tomato)).